A 434-amino-acid chain; its full sequence is Gamma-glutamyl phosphate reductase (434 aa).

It belongs to the gamma-glutamyl phosphate reductase family.

Its subcellular location is the cytoplasm. The enzyme catalyses L-glutamate 5-semialdehyde + phosphate + NADP(+) = L-glutamyl 5-phosphate + NADPH + H(+). Its pathway is amino-acid biosynthesis; L-proline biosynthesis; L-glutamate 5-semialdehyde from L-glutamate: step 2/2. Functionally, catalyzes the NADPH-dependent reduction of L-glutamate 5-phosphate into L-glutamate 5-semialdehyde and phosphate. The product spontaneously undergoes cyclization to form 1-pyrroline-5-carboxylate. The chain is Gamma-glutamyl phosphate reductase from Trichormus variabilis (strain ATCC 29413 / PCC 7937) (Anabaena variabilis).